The chain runs to 593 residues: Metal-response element-binding transcription factor 2 (593 aa).

Residues 1–24 are disordered; that stretch reads MRDSTGAGNSLVHKRSPLRRNQKT. Residues 12–22 show a composition bias toward basic residues; the sequence is VHKRSPLRRNQ. Phosphothreonine is present on Thr-24. The 58-residue stretch at 44-101 folds into the Tudor domain; sequence CKFEEGQDVLARWSDGLFYLGTIKKINILKQSCFIIFEDSSKSWVLWKDIQTGATGSG. 2 consecutive PHD-type zinc fingers follow at residues 102 to 157 and 201 to 255; these read EMVC…CVFA and QCYC…CSSG. Disordered stretches follow at residues 357–410 and 444–486; these read VAFK…GPYT and GIAH…TRTG. Lys-360 is covalently cross-linked (Glycyl lysine isopeptide (Lys-Gly) (interchain with G-Cter in SUMO2)). The segment covering 360 to 374 has biased composition (basic and acidic residues); sequence KAEKEPEGTSHEFKI. Positions 447–470 are enriched in polar residues; the sequence is HSSNTSDVDLTGASSANETTSASI. The residue at position 452 (Ser-452) is a Phosphoserine. Lys-522 participates in a covalent cross-link: Glycyl lysine isopeptide (Lys-Gly) (interchain with G-Cter in SUMO2).

The protein belongs to the Polycomblike family. Associates with the PRC2 complex, which consists of the core components EED, EZH1 or EZH2, SUZ12, and RBBP4, and various combinations of accessory subunits including AEBP2, JARID2, PHF19, MTF2 and EPOP. Forms a dimeric PRC2.1 (class 1, PRC-PCL) complex consisting of at least SUZ12, RBBP4, and PHF19 or MTF2; PHF19 and MTF2 stabilize the dimeric structure which enhances PRC2 interaction with chromatin.

Its subcellular location is the nucleus. Its function is as follows. Polycomb group (PcG) protein that specifically binds histone H3 trimethylated at 'Lys-36' (H3K36me3) and recruits the PRC2 complex, thus enhancing PRC2 H3K27me3 methylation activity. Regulates the transcriptional networks during embryonic stem cell self-renewal and differentiation. Promotes recruitment of the PRC2 complex to the inactive X chromosome in differentiating XX ES cells and PRC2 recruitment to target genes in undifferentiated ES cells. Required to repress Hox genes by enhancing H3K27me3 methylation of the PRC2 complex. In some conditions may act as an inhibitor of PRC2 activity: able to activate the CDKN2A gene and promote cellular senescence by suppressing the catalytic activity of the PRC2 complex locally. Binds to the metal-regulating-element (MRE) of MT1A gene promoter. This is Metal-response element-binding transcription factor 2 (Mtf2) from Mus musculus (Mouse).